The following is a 401-amino-acid chain: Imidazolonepropionase (401 aa).

The Fe(3+) site is built by histidine 66 and histidine 68. Residues histidine 66 and histidine 68 each contribute to the Zn(2+) site. 3 residues coordinate 4-imidazolone-5-propanoate: arginine 75, tyrosine 138, and histidine 171. Tyrosine 138 lines the N-formimidoyl-L-glutamate pocket. Histidine 236 contributes to the Fe(3+) binding site. Residue histidine 236 coordinates Zn(2+). Position 239 (glutamine 239) interacts with 4-imidazolone-5-propanoate. Aspartate 311 provides a ligand contact to Fe(3+). Residue aspartate 311 coordinates Zn(2+). N-formimidoyl-L-glutamate contacts are provided by asparagine 313 and glycine 315. A 4-imidazolone-5-propanoate-binding site is contributed by threonine 316.

This sequence belongs to the metallo-dependent hydrolases superfamily. HutI family. Zn(2+) is required as a cofactor. It depends on Fe(3+) as a cofactor.

It localises to the cytoplasm. The enzyme catalyses 4-imidazolone-5-propanoate + H2O = N-formimidoyl-L-glutamate. It participates in amino-acid degradation; L-histidine degradation into L-glutamate; N-formimidoyl-L-glutamate from L-histidine: step 3/3. In terms of biological role, catalyzes the hydrolytic cleavage of the carbon-nitrogen bond in imidazolone-5-propanoate to yield N-formimidoyl-L-glutamate. It is the third step in the universal histidine degradation pathway. The polypeptide is Imidazolonepropionase (Pseudomonas putida (Arthrobacter siderocapsulatus)).